The following is a 391-amino-acid chain: Putative 1-acyl-sn-glycerol-3-phosphate acyltransferase acl-12 (391 aa).

2 helical membrane-spanning segments follow: residues Phe-47–Phe-67 and Leu-84–Thr-104. Residues His-124–Asp-129 carry the HXXXXD motif motif.

Belongs to the 1-acyl-sn-glycerol-3-phosphate acyltransferase family.

It localises to the membrane. It carries out the reaction a 1-acyl-sn-glycero-3-phosphate + an acyl-CoA = a 1,2-diacyl-sn-glycero-3-phosphate + CoA. The protein operates within phospholipid metabolism; CDP-diacylglycerol biosynthesis; CDP-diacylglycerol from sn-glycerol 3-phosphate: step 2/3. In terms of biological role, converts lysophosphatidic acid (LPA) into phosphatidic acid by incorporating an acyl moiety at the sn-2 position of the glycerol backbone. The polypeptide is Putative 1-acyl-sn-glycerol-3-phosphate acyltransferase acl-12 (acl-12) (Caenorhabditis elegans).